Here is a 288-residue protein sequence, read N- to C-terminus: NAD kinase (288 aa).

D73 acts as the Proton acceptor in catalysis. NAD(+)-binding positions include 73–74 (DG), R78, 144–145 (NE), D174, 185–190 (TAYSLS), and A209.

Belongs to the NAD kinase family. A divalent metal cation is required as a cofactor.

Its subcellular location is the cytoplasm. It catalyses the reaction NAD(+) + ATP = ADP + NADP(+) + H(+). Functionally, involved in the regulation of the intracellular balance of NAD and NADP, and is a key enzyme in the biosynthesis of NADP. Catalyzes specifically the phosphorylation on 2'-hydroxyl of the adenosine moiety of NAD to yield NADP. This is NAD kinase from Porphyromonas gingivalis (strain ATCC BAA-308 / W83).